The sequence spans 28 residues: NU-theraphotoxin-Preg1a (28 aa).

Disulfide bonds link cysteine 2–cysteine 19, cysteine 9–cysteine 22, and cysteine 18–cysteine 27.

Expressed by the venom gland.

Its subcellular location is the secreted. Toxin that acts as an agonist on melanocortin receptors (MC1R, MC3R, MC5R, MC5R). After binding to MC1R, the peptide activates the hMC1R/Gs pathway, but after binding to MC4R, it is not able to activate or antagonize the MC4R/Gs pathway. Inhibits melanocyte stimulating hormone (MSH)-binding to human receptors (Ki=1.8 uM to MC1R, Ki=19.8 uM to MC3R, Ki=7.1 uM to MC4R, Ki=10.0 uM to MC5R). This toxin is structurally unrelated to the natural agonists. This is NU-theraphotoxin-Preg1a from Poecilotheria regalis (Indian ornamental tree spider).